Here is a 145-residue protein sequence, read N- to C-terminus: Lysozyme C (145 aa).

A signal peptide spans 1 to 19; sequence MLFFGFLLAFLSAVPGTEG. Residues 20 to 145 enclose the C-type lysozyme domain; sequence EIIPRCELVK…RDLSSYVKGC (126 aa). Intrachain disulfides connect Cys-25/Cys-145, Cys-49/Cys-133, Cys-82/Cys-98, and Cys-94/Cys-112. Active-site residues include Glu-54 and Asp-70.

The protein belongs to the glycosyl hydrolase 22 family. In terms of assembly, monomer.

It is found in the secreted. It carries out the reaction Hydrolysis of (1-&gt;4)-beta-linkages between N-acetylmuramic acid and N-acetyl-D-glucosamine residues in a peptidoglycan and between N-acetyl-D-glucosamine residues in chitodextrins.. Its function is as follows. Lysozymes have primarily a bacteriolytic function; those in tissues and body fluids are associated with the monocyte-macrophage system and enhance the activity of immunoagents. The polypeptide is Lysozyme C (LYZ) (Opisthocomus hoazin (Hoatzin)).